The following is a 128-amino-acid chain: Glycine cleavage system H protein (128 aa).

The region spanning 24-106 (VATVGITAFA…YNNGWLLKIK (83 aa)) is the Lipoyl-binding domain. Lys-65 carries the N6-lipoyllysine modification.

Belongs to the GcvH family. As to quaternary structure, the glycine cleavage system is composed of four proteins: P, T, L and H. (R)-lipoate is required as a cofactor.

The glycine cleavage system catalyzes the degradation of glycine. The H protein shuttles the methylamine group of glycine from the P protein to the T protein. In Acaryochloris marina (strain MBIC 11017), this protein is Glycine cleavage system H protein.